A 50-amino-acid polypeptide reads, in one-letter code: Small ribosomal subunit protein uS14 (50 aa).

The Zn(2+) site is built by C15, C18, C33, and C36.

Belongs to the universal ribosomal protein uS14 family. Zinc-binding uS14 subfamily. Part of the 30S ribosomal subunit. Zn(2+) is required as a cofactor.

Its function is as follows. Binds 16S rRNA, required for the assembly of 30S particles. The sequence is that of Small ribosomal subunit protein uS14 from Methanococcoides burtonii (strain DSM 6242 / NBRC 107633 / OCM 468 / ACE-M).